Reading from the N-terminus, the 558-residue chain is Glucose-6-phosphate isomerase (558 aa).

The residue at position 12 (Lys-12) is an N6-acetyllysine. Residues Ser-86 and Ser-107 each carry the phosphoserine modification. At Lys-142 the chain carries N6-acetyllysine. 159 to 160 (GS) provides a ligand contact to D-glucose 6-phosphate. Ser-185 bears the Phosphoserine; by CK2 mark. Residue 210–215 (SKTFTT) coordinates D-glucose 6-phosphate. Thr-250 is modified (phosphothreonine). D-glucose 6-phosphate is bound by residues Gln-354, Glu-358, and His-389. The active-site Proton donor is Glu-358. His-389 is a catalytic residue. At Lys-454 the chain carries N6-acetyllysine; alternate. An N6-malonyllysine; alternate modification is found at Lys-454. N6-succinyllysine; alternate is present on Lys-454. Residue Ser-455 is modified to Phosphoserine. Lys-519 lines the D-glucose 6-phosphate pocket. Lys-519 is an active-site residue.

This sequence belongs to the GPI family. In terms of assembly, homodimer; in the catalytically active form. Monomer in the secreted form. In terms of processing, phosphorylation at Ser-185 by CK2 has been shown to decrease enzymatic activity and may contribute to secretion by a non-classical secretory pathway. Post-translationally, ISGylated.

The protein localises to the cytoplasm. Its subcellular location is the secreted. The catalysed reaction is alpha-D-glucose 6-phosphate = beta-D-fructose 6-phosphate. It participates in carbohydrate degradation; glycolysis; D-glyceraldehyde 3-phosphate and glycerone phosphate from D-glucose: step 2/4. In terms of biological role, in the cytoplasm, catalyzes the conversion of glucose-6-phosphate to fructose-6-phosphate, the second step in glycolysis, and the reverse reaction during gluconeogenesis. Besides it's role as a glycolytic enzyme, also acts as a secreted cytokine: acts as an angiogenic factor (AMF) that stimulates endothelial cell motility. Acts as a neurotrophic factor, neuroleukin, for spinal and sensory neurons. It is secreted by lectin-stimulated T-cells and induces immunoglobulin secretion. The protein is Glucose-6-phosphate isomerase of Cricetulus griseus (Chinese hamster).